The sequence spans 453 residues: tRNA modification GTPase MnmE (453 aa).

(6S)-5-formyl-5,6,7,8-tetrahydrofolate contacts are provided by arginine 22, glutamate 79, and lysine 119. The TrmE-type G domain occupies 215 to 376 (GMKVVIAGRP…LKQHLKSLMG (162 aa)). A K(+)-binding site is contributed by asparagine 225. Residues 225-230 (NAGKSS), 244-250 (TEIAGTT), 269-272 (DTAG), and 334-337 (NKAD) each bind GTP. Residue serine 229 participates in Mg(2+) binding. Threonine 244, isoleucine 246, and threonine 249 together coordinate K(+). Threonine 250 provides a ligand contact to Mg(2+). Lysine 453 is a (6S)-5-formyl-5,6,7,8-tetrahydrofolate binding site.

The protein belongs to the TRAFAC class TrmE-Era-EngA-EngB-Septin-like GTPase superfamily. TrmE GTPase family. As to quaternary structure, homodimer. Heterotetramer of two MnmE and two MnmG subunits. Requires K(+) as cofactor.

It localises to the cytoplasm. Its function is as follows. Exhibits a very high intrinsic GTPase hydrolysis rate. Involved in the addition of a carboxymethylaminomethyl (cmnm) group at the wobble position (U34) of certain tRNAs, forming tRNA-cmnm(5)s(2)U34. The sequence is that of tRNA modification GTPase MnmE from Shewanella oneidensis (strain ATCC 700550 / JCM 31522 / CIP 106686 / LMG 19005 / NCIMB 14063 / MR-1).